The following is a 125-amino-acid chain: Alpha-endosulfine (125 aa).

The span at Met1–Leu37 shows a compositional bias: basic and acidic residues. A disordered region spans residues Met1–Phe53. Thr28 is subject to Phosphothreonine; by CDK2. Residue Ser67 is modified to Phosphoserine; by GWL. The tract at residues Gln81–Ser108 is disordered. A Phosphothreonine; by CDK2 modification is found at Thr99. Ser109 bears the Phosphoserine; by PKA mark.

The protein belongs to the endosulfine family. Phosphorylation at Ser-67 by gwl during mitosis is essential for interaction with ppp2r2d (PR55-delta) and subsequent inactivation of PP2A.

The protein resides in the cytoplasm. Its function is as follows. Protein phosphatase inhibitor that specifically inhibits protein phosphatase 2A (PP2A) during mitosis. When phosphorylated at Ser-67 during mitosis, specifically interacts with ppp2r2d (PR55-delta) and inhibits its activity, leading to inactivation of PP2A, an essential condition to keep cyclin-B1-CDK1 activity high during M phase. This chain is Alpha-endosulfine (ensa), found in Xenopus tropicalis (Western clawed frog).